The following is a 138-amino-acid chain: Vesicle transport protein GOT1B (138 aa).

Position 1 is an N-acetylmethionine (methionine 1). The Cytoplasmic segment spans residues 1–9 (MISLTDTQK). Residues 10–30 (IGMGLTGFGVFFLFFGMILFF) traverse the membrane as a helical segment. The Lumenal portion of the chain corresponds to 31–32 (DK). The chain crosses the membrane as a helical span at residues 33–53 (ALLAIGNVLFVAGLAFVIGLE). Residues 54-68 (RTFRFFFQRHKVKAT) are Cytoplasmic-facing. Residue glutamate 90 is a topological domain, lumenal. The chain crosses the membrane as a helical span at residues 91–109 (IYGFFLLFRGFFPVVVGFI). Residues 110 to 138 (RRVPVLGSLLNLPGIRSFVDKVGESNNMV) lie on the Cytoplasmic side of the membrane.

This sequence belongs to the GOT1 family.

Its subcellular location is the golgi apparatus membrane. May be involved in fusion of ER-derived transport vesicles with the Golgi complex. The sequence is that of Vesicle transport protein GOT1B (Golt1b) from Mus musculus (Mouse).